Consider the following 549-residue polypeptide: Tigger transposable element-derived protein 7 (549 aa).

The 52-residue stretch at 1 to 52 folds into the HTH psq-type domain; that stretch reads MNKRGKYTTLNLEEKMKVLSRIEAGRSLKSVMDEFGISKSTFYDIKKNKKLI. 2 DNA-binding regions (H-T-H motif) span residues 28–48 and 101–132; these read LKSVMDEFGISKSTFYDIKKN and VELQAAAERFARCFGRTDFKASTGWLFRFRNR. The HTH CENPB-type domain maps to 68–139; that stretch reads KRKRTTGAKY…RNRHAIGNRK (72 aa). In terms of domain architecture, DDE-1 spans 169–399; the sequence is LCLAQLYSGD…VKQITIANAW (231 aa). The disordered stretch occupies residues 527–549; the sequence is FLKPRPHNIKDSFSGPSTSGSNH. The segment covering 540–549 has biased composition (polar residues); that stretch reads SGPSTSGSNH.

This sequence belongs to the tigger transposable element derived protein family. In terms of tissue distribution, expressed in all tissues tested. Higher expression in testis and ovary.

The protein resides in the nucleus. The sequence is that of Tigger transposable element-derived protein 7 (TIGD7) from Homo sapiens (Human).